We begin with the raw amino-acid sequence, 418 residues long: Deubiquitinase and deneddylase Dub1 (418 aa).

Polar residues predominate over residues 1 to 10; it reads MLSPTNSISK. Residues 1–23 are disordered; sequence MLSPTNSISKTAPVPPQDSSKPV. The chain crosses the membrane as a helical span at residues 40–60; the sequence is TALAVLLVVVTLGLILLFYSF. Positions 72 to 144 are disordered; it reads TRPSTKEQPT…PLPPKAPKPV (73 aa). Over residues 86–141 the composition is skewed to pro residues; sequence VPLPSPPLAVPRPSTPPPPVISRPSTPPAPTPAISPPSTPSAPKPSTPPPLPPKAP. Catalysis depends on residues histidine 288, aspartate 305, and cysteine 358.

Belongs to the peptidase C48 family.

The protein localises to the secreted. It localises to the host cell. The protein resides in the membrane. In terms of biological role, effector proteins function to alter host cell physiology and promote bacterial survival in host tissues. This protease possesses deubiquitinating and deneddylating activities. This Chlamydia trachomatis serovar B (strain TZ1A828/OT) protein is Deubiquitinase and deneddylase Dub1 (cdu1).